Consider the following 293-residue polypeptide: 33 kDa chaperonin (293 aa).

Cystine bridges form between cysteine 238-cysteine 240 and cysteine 271-cysteine 274.

It belongs to the HSP33 family. Under oxidizing conditions two disulfide bonds are formed involving the reactive cysteines. Under reducing conditions zinc is bound to the reactive cysteines and the protein is inactive.

It is found in the cytoplasm. Redox regulated molecular chaperone. Protects both thermally unfolding and oxidatively damaged proteins from irreversible aggregation. Plays an important role in the bacterial defense system toward oxidative stress. In Staphylococcus epidermidis (strain ATCC 35984 / DSM 28319 / BCRC 17069 / CCUG 31568 / BM 3577 / RP62A), this protein is 33 kDa chaperonin.